The following is a 533-amino-acid chain: Flavin-containing monooxygenase 5 (533 aa).

A Dimethylated arginine modification is found at R5. FAD is bound by residues 10-14 (GGGVS), E33, and 41-42 (LW). S54 bears the Phosphoserine mark. The residue at position 56 (Y56) is a Phosphotyrosine. Residue S58 is modified to Phosphoserine. Residue 62–63 (NT) participates in FAD binding. 196–199 (SGGD) is a binding site for NADP(+). At S280 the chain carries Phosphoserine. T284 carries the post-translational modification Phosphothreonine. A Phosphoserine modification is found at S401. The chain crosses the membrane as a helical span at residues 513 to 533 (TMTIGKFMLALAFFAIIIAYF).

The protein belongs to the FMO family. FAD is required as a cofactor. In terms of tissue distribution, expressed in fetal and adult liver.

The protein resides in the microsome membrane. Its subcellular location is the endoplasmic reticulum membrane. It carries out the reaction N,N-dimethylaniline + NADPH + O2 + H(+) = N,N-dimethylaniline N-oxide + NADP(+) + H2O. The catalysed reaction is NADPH + O2 + H(+) = H2O2 + NADP(+). The enzyme catalyses heptan-2-one + NADPH + O2 + H(+) = pentyl acetate + NADP(+) + H2O. It catalyses the reaction octan-3-one + NADPH + O2 + H(+) = pentyl propanoate + NADP(+) + H2O. It carries out the reaction octan-3-one + NADPH + O2 + H(+) = ethyl hexanoate + NADP(+) + H2O. The catalysed reaction is hexan-3-one + NADPH + O2 + H(+) = ethyl butanoate + NADP(+) + H2O. The enzyme catalyses hexan-3-one + NADPH + O2 + H(+) = propyl propanoate + NADP(+) + H2O. It catalyses the reaction heptan-4-one + NADPH + O2 + H(+) = propyl butanoate + NADP(+) + H2O. It carries out the reaction (2E)-geranial + NADPH + O2 + H(+) = (1E)-2,6-dimethylhepta-1,5-dien-1-yl formate + NADP(+) + H2O. The catalysed reaction is sulcatone + NADPH + O2 + H(+) = 4-methylpent-3-en-1-yl acetate + NADP(+) + H2O. Its function is as follows. Acts as a Baeyer-Villiger monooxygenase on a broad range of substrates. Catalyzes the insertion of an oxygen atom into a carbon-carbon bond adjacent to a carbonyl, which converts ketones to esters. Active on diverse carbonyl compounds, whereas soft nucleophiles are mostly non- or poorly reactive. In contrast with other forms of FMO it is non- or poorly active on 'classical' substrates such as drugs, pesticides, and dietary components containing soft nucleophilic heteroatoms. Able to oxidize drug molecules bearing a carbonyl group on an aliphatic chain, such as nabumetone and pentoxifylline. Also, in the absence of substrates, shows slow but yet significant NADPH oxidase activity. Acts as a positive modulator of cholesterol biosynthesis as well as glucose homeostasis, promoting metabolic aging via pleiotropic effects. This is Flavin-containing monooxygenase 5 from Homo sapiens (Human).